A 282-amino-acid polypeptide reads, in one-letter code: Putative polysaccharide deacetylase YheN (282 aa).

A helical transmembrane segment spans residues 15-35; it reads LAFKFASLAVLCVLLLLMVIL. The region spanning 85 to 271 is the NodB homology domain; that stretch reads KTVYLTFDDG…KLKEKGYSFG (187 aa).

This sequence belongs to the polysaccharide deacetylase family.

Its subcellular location is the cell membrane. In Bacillus subtilis (strain 168), this protein is Putative polysaccharide deacetylase YheN (yheN).